The primary structure comprises 320 residues: Malate dehydrogenase (320 aa).

NAD(+) contacts are provided by residues 10 to 15 (GAGQIG) and aspartate 34. Substrate-binding residues include arginine 83 and arginine 89. NAD(+) contacts are provided by residues asparagine 96 and 119–121 (ITN). Residues asparagine 121 and arginine 152 each contribute to the substrate site. Histidine 176 functions as the Proton acceptor in the catalytic mechanism.

Belongs to the LDH/MDH superfamily. MDH type 3 family.

The enzyme catalyses (S)-malate + NAD(+) = oxaloacetate + NADH + H(+). Its function is as follows. Catalyzes the reversible oxidation of malate to oxaloacetate. The chain is Malate dehydrogenase from Beijerinckia indica subsp. indica (strain ATCC 9039 / DSM 1715 / NCIMB 8712).